The chain runs to 293 residues: Formamidopyrimidine-DNA glycosylase (293 aa).

The active-site Schiff-base intermediate with DNA is the Pro-2. Residue Glu-3 is the Proton donor of the active site. Catalysis depends on Lys-58, which acts as the Proton donor; for beta-elimination activity. His-104, Arg-123, and Arg-166 together coordinate DNA. The FPG-type zinc-finger motif lies at 257 to 293 (KVYDREGEPCPTLRCKGHVQRIVQAGRSTFFCATCQR). The Proton donor; for delta-elimination activity role is filled by Arg-283.

The protein belongs to the FPG family. Monomer. Requires Zn(2+) as cofactor.

It carries out the reaction Hydrolysis of DNA containing ring-opened 7-methylguanine residues, releasing 2,6-diamino-4-hydroxy-5-(N-methyl)formamidopyrimidine.. It catalyses the reaction 2'-deoxyribonucleotide-(2'-deoxyribose 5'-phosphate)-2'-deoxyribonucleotide-DNA = a 3'-end 2'-deoxyribonucleotide-(2,3-dehydro-2,3-deoxyribose 5'-phosphate)-DNA + a 5'-end 5'-phospho-2'-deoxyribonucleoside-DNA + H(+). Involved in base excision repair of DNA damaged by oxidation or by mutagenic agents. Acts as a DNA glycosylase that recognizes and removes damaged bases. Has a preference for oxidized purines, such as 7,8-dihydro-8-oxoguanine (8-oxoG). Has AP (apurinic/apyrimidinic) lyase activity and introduces nicks in the DNA strand. Cleaves the DNA backbone by beta-delta elimination to generate a single-strand break at the site of the removed base with both 3'- and 5'-phosphates. The sequence is that of Formamidopyrimidine-DNA glycosylase from Azorhizobium caulinodans (strain ATCC 43989 / DSM 5975 / JCM 20966 / LMG 6465 / NBRC 14845 / NCIMB 13405 / ORS 571).